The chain runs to 294 residues: MFLEKLVEMARGKGKKLAVAAANDDHVIEAVYRAWRERVCEPVLFGPEEEITRIIEELVPEWKNPQIIDCPPEEAGRLAVEAVSKGECDFLMKGKIKTGDLMKIYLDERYGLRTGKTMAMVSVMEIPDFPRPLIISDPGMLISPTLEQKVDMIEHCVRVANVMGLETPKVAVVGAIEVVNPKMPITMEAAILSKMNQRGQIKGCIVDGPFALDNVVSEEAAKKKGIQSPVAGKADILILPDIEAANILYKALVFLAKAKSASTILGGKVPVVLTSRADSEETKFYSIALSAVFA.

The protein belongs to the phosphate acetyltransferase and butyryltransferase family. As to quaternary structure, homotetramer.

It localises to the cytoplasm. The catalysed reaction is acetyl-CoA + phosphate = acetyl phosphate + CoA. It functions in the pathway metabolic intermediate biosynthesis; acetyl-CoA biosynthesis; acetyl-CoA from acetate: step 2/2. Its function is as follows. In addition to acetyl-CoA (100%), the enzyme accepts propionyl-CoA (60%) and butyryl-CoA (30%). The protein is Phosphate acetyltransferase (pta) of Thermotoga maritima (strain ATCC 43589 / DSM 3109 / JCM 10099 / NBRC 100826 / MSB8).